The primary structure comprises 95 residues: Large ribosomal subunit protein uL23 (95 aa).

It belongs to the universal ribosomal protein uL23 family. Contacts protein L29, and trigger factor when it is bound to the ribosome. Part of the 50S ribosomal subunit.

Functionally, one of the early assembly proteins it binds 23S rRNA. One of the proteins that surrounds the polypeptide exit tunnel on the outside of the ribosome. Forms the main docking site for trigger factor binding to the ribosome. This chain is Large ribosomal subunit protein uL23, found in Geobacillus stearothermophilus (Bacillus stearothermophilus).